Reading from the N-terminus, the 81-residue chain is uncharacterized protein (81 aa).

2 helical membrane-spanning segments follow: residues 1–21 (MTLF…FSLL) and 27–47 (IFIY…HHFF).

It localises to the membrane. This is an uncharacterized protein from Saccharomyces cerevisiae (strain ATCC 204508 / S288c) (Baker's yeast).